The sequence spans 601 residues: Probable translation initiation factor IF-2 (601 aa).

Residues 14–229 form the tr-type G domain; that stretch reads LRTPIVAVLG…VMMGLSQRYM (216 aa). Residues 23 to 30 are G1; it reads GHVDHGKT. 23-30 is a GTP binding site; that stretch reads GHVDHGKT. The tract at residues 48-52 is G2; that stretch reads AITQH. The tract at residues 85–88 is G3; sequence DTPG. GTP-binding positions include 85–89 and 139–142; these read DTPGH and NKID. The G4 stretch occupies residues 139–142; sequence NKID. Residues 207–209 form a G5 region; that stretch reads SAE.

This sequence belongs to the TRAFAC class translation factor GTPase superfamily. Classic translation factor GTPase family. IF-2 subfamily.

In terms of biological role, function in general translation initiation by promoting the binding of the formylmethionine-tRNA to ribosomes. Seems to function along with eIF-2. This is Probable translation initiation factor IF-2 from Haloarcula marismortui (strain ATCC 43049 / DSM 3752 / JCM 8966 / VKM B-1809) (Halobacterium marismortui).